Consider the following 392-residue polypeptide: Protein RecA (392 aa).

The disordered stretch occupies residues 1–21 (MALETKPAQDPATEIKHELDP). Residue 83 to 90 (GPESSGKT) coordinates ATP. Residues 372–392 (DAAKDTKATAAPAAKSSRAKA) are disordered. Positions 379–392 (ATAAPAAKSSRAKA) are enriched in low complexity.

The protein belongs to the RecA family.

It is found in the cytoplasm. In terms of biological role, can catalyze the hydrolysis of ATP in the presence of single-stranded DNA, the ATP-dependent uptake of single-stranded DNA by duplex DNA, and the ATP-dependent hybridization of homologous single-stranded DNAs. It interacts with LexA causing its activation and leading to its autocatalytic cleavage. The protein is Protein RecA of Bifidobacterium breve.